A 325-amino-acid chain; its full sequence is ATP phosphoribosyltransferase (325 aa).

It belongs to the ATP phosphoribosyltransferase family. Long subfamily. It depends on Mg(2+) as a cofactor.

Its subcellular location is the cytoplasm. It catalyses the reaction 1-(5-phospho-beta-D-ribosyl)-ATP + diphosphate = 5-phospho-alpha-D-ribose 1-diphosphate + ATP. It functions in the pathway amino-acid biosynthesis; L-histidine biosynthesis; L-histidine from 5-phospho-alpha-D-ribose 1-diphosphate: step 1/9. Feedback inhibited by histidine. Its function is as follows. Catalyzes the condensation of ATP and 5-phosphoribose 1-diphosphate to form N'-(5'-phosphoribosyl)-ATP (PR-ATP). Has a crucial role in the pathway because the rate of histidine biosynthesis seems to be controlled primarily by regulation of HisG enzymatic activity. The sequence is that of ATP phosphoribosyltransferase from Rhodopseudomonas palustris (strain HaA2).